The sequence spans 522 residues: Apolipoprotein N-acyltransferase (522 aa).

6 helical membrane passes run 17-37, 61-81, 98-118, 127-147, 164-184, and 197-217; these read YFTY…FSPF, TALL…VSWL, FLVG…TYLV, VIFA…FTGF, IAPI…SAVI, and LKLV…SAYS. Residues 236–483 enclose the CN hydrolase domain; sequence AQGNIEQNLK…ETTLTYKIAP (248 aa). The active-site Proton acceptor is the Glu-276. Lys-342 is a catalytic residue. The active-site Nucleophile is Cys-394. The chain crosses the membrane as a helical span at residues 495–515; sequence NMPLYALSLLFLLLHSMMAFI.

This sequence belongs to the CN hydrolase family. Apolipoprotein N-acyltransferase subfamily.

It localises to the cell inner membrane. It catalyses the reaction N-terminal S-1,2-diacyl-sn-glyceryl-L-cysteinyl-[lipoprotein] + a glycerophospholipid = N-acyl-S-1,2-diacyl-sn-glyceryl-L-cysteinyl-[lipoprotein] + a 2-acyl-sn-glycero-3-phospholipid + H(+). It functions in the pathway protein modification; lipoprotein biosynthesis (N-acyl transfer). Functionally, catalyzes the phospholipid dependent N-acylation of the N-terminal cysteine of apolipoprotein, the last step in lipoprotein maturation. This is Apolipoprotein N-acyltransferase from Haemophilus influenzae (strain ATCC 51907 / DSM 11121 / KW20 / Rd).